We begin with the raw amino-acid sequence, 458 residues long: Phosphoglucosamine mutase (458 aa).

The Phosphoserine intermediate role is filled by serine 100. Mg(2+) is bound by residues serine 100, aspartate 239, aspartate 241, and aspartate 243. Serine 100 is modified (phosphoserine).

The protein belongs to the phosphohexose mutase family. It depends on Mg(2+) as a cofactor. Activated by phosphorylation.

It carries out the reaction alpha-D-glucosamine 1-phosphate = D-glucosamine 6-phosphate. In terms of biological role, catalyzes the conversion of glucosamine-6-phosphate to glucosamine-1-phosphate. This is Phosphoglucosamine mutase from Dictyoglomus thermophilum (strain ATCC 35947 / DSM 3960 / H-6-12).